The sequence spans 220 residues: dITP/XTP pyrophosphatase (220 aa).

Position 13 to 18 (13 to 18 (SHNAGK)) interacts with substrate. Mg(2+) is bound by residues Asp-45 and Asp-74. Asp-74 (proton acceptor) is an active-site residue. Substrate-binding positions include Ser-75, 163–166 (FGYD), Lys-186, and 199–200 (HR).

It belongs to the HAM1 NTPase family. Homodimer. Requires Mg(2+) as cofactor.

It carries out the reaction XTP + H2O = XMP + diphosphate + H(+). The catalysed reaction is dITP + H2O = dIMP + diphosphate + H(+). It catalyses the reaction ITP + H2O = IMP + diphosphate + H(+). Its function is as follows. Pyrophosphatase that catalyzes the hydrolysis of nucleoside triphosphates to their monophosphate derivatives, with a high preference for the non-canonical purine nucleotides XTP (xanthosine triphosphate), dITP (deoxyinosine triphosphate) and ITP. Seems to function as a house-cleaning enzyme that removes non-canonical purine nucleotides from the nucleotide pool, thus preventing their incorporation into DNA/RNA and avoiding chromosomal lesions. The sequence is that of dITP/XTP pyrophosphatase from Mesorhizobium japonicum (strain LMG 29417 / CECT 9101 / MAFF 303099) (Mesorhizobium loti (strain MAFF 303099)).